The sequence spans 260 residues: Salicylic acid-binding protein 2 (260 aa).

The salicylate site is built by A13, S81, and K159. The active-site Acyl-ester intermediate is S81. Residues D210 and H238 each act as charge relay system in the active site. 3 residues coordinate salicylate: H238, L253, and H257.

This sequence belongs to the AB hydrolase superfamily. Methylesterase family.

It carries out the reaction methyl salicylate + H2O = salicylate + methanol + H(+). Its pathway is plant hormone biosynthesis. With respect to regulation, esterase activity is down-regulated by salicylic acid (SA) or by tetraFA, a synthetic SA analog. Its function is as follows. Required to convert methyl salicylate (MeSA) to salicylic acid (SA) as part of the signal transduction pathways that activate systemic acquired resistance in systemic tissue. MeSA is believed to be an inactive form that needs to be demethylated to exert a biological effect. Also able to catalyze the conversion of acibenzolar-S-methyl into acibenzolar to induce systemic acquired resistance. The protein is Salicylic acid-binding protein 2 of Nicotiana tabacum (Common tobacco).